The following is a 51-amino-acid chain: Large ribosomal subunit protein bL33 (51 aa).

This sequence belongs to the bacterial ribosomal protein bL33 family.

The polypeptide is Large ribosomal subunit protein bL33 (Nitrosococcus oceani (strain ATCC 19707 / BCRC 17464 / JCM 30415 / NCIMB 11848 / C-107)).